A 550-amino-acid polypeptide reads, in one-letter code: MNHVPSDQSFYIESEDEDDRKDYVEEDGGSHSDSSDDVYDENQAHIKPSSYTTAWPQSYRQSIDLYSSVPSPGIGFLGNNSMTRFGSSFLSSGLIRRHTPESLPTVTKPLLEEQADEQALPKHRLSSQGLLSPIPSRRGSMRKDEKSSMVSHEIPMSRNSSYGQAVLNGLNVLCGVGILSTPYAAKEGGWLGLMILFVYGLLSFYTGILLRYCLDSESDLETYPDIGQAAFGTTGRIFVSIVLYLELYACCVEYIILESDNLSSLYPNAALSIGGFQLDARHLFALLTTLAVLPTVWLRDLSVLSYISAGGVIASVLVVLCLFWIGLVDEVGIHSKGTTLNLSTLPVAIGLYGYCYSGHAVFPNIYTSMAKPSQYPAVLLTCFGICTLMYAGVAVMGYTMFGESTQSQFTLNLPQDLIATKIAVWTTVVNPFTKYALTISPVAMSLEELIPSRHIRSHWYAIGIRTLLVFSTLLVGLAIPFFGLVMSLIGSLLTMLVTLILPPACFLSIVRRKVTPTQMMLCVLIIIVGAISSVIGSYSALSKIVEKLTN.

Positions 1 to 11 (MNHVPSDQSFY) are enriched in polar residues. 2 disordered regions span residues 1–44 (MNHV…ENQA) and 128–148 (QGLL…EKSS). A compositionally biased stretch (basic and acidic residues) spans 20 to 34 (RKDYVEEDGGSHSDS). The next 11 helical transmembrane spans lie at 165-185 (AVLN…PYAA), 190-210 (WLGL…GILL), 237-257 (IFVS…YIIL), 283-303 (LFAL…DLSV), 307-327 (ISAG…WIGL), 342-362 (LSTL…HAVF), 377-397 (AVLL…AVMG), 422-442 (IAVW…ISPV), 462-484 (IGIR…FFGL), 488-510 (LIGS…LSIV), and 521-541 (LCVL…YSAL).

The protein belongs to the amino acid/polyamine transporter 2 family. Amino acid/auxin permease (AAAP) (TC 2.A.18.5) subfamily.

The protein resides in the membrane. The polypeptide is Amino acid transporter AVT1C (Arabidopsis thaliana (Mouse-ear cress)).